We begin with the raw amino-acid sequence, 390 residues long: Alpha-2B adrenergic receptor (390 aa).

A helical transmembrane segment spans residues 1–25 (AIATVITFLILFTIFGNSLVILAVL). Residues 26 to 36 (TSRSLRAPQNL) lie on the Cytoplasmic side of the membrane. A helical transmembrane segment spans residues 37-62 (FLVSLAAADIMVATLIIPFSLANELL). Over 63–72 (GYWYFRRTWC) the chain is Extracellular. The cysteines at positions 72 and 151 are disulfide-linked. A helical membrane pass occupies residues 73–95 (EVYLALDVLFCTSSIVHLCAISL). The Cytoplasmic segment spans residues 96 to 117 (DRYWAVSRALEYNSKRTPRRIK). The chain crosses the membrane as a helical span at residues 118–140 (CIILTVWLIAAAISLPPLIYKGD). Residues 141-156 (QGPQPRGRPQCKLNQE) lie on the Extracellular side of the membrane. Residues 157 to 180 (AWYILSSSIGSFFAPCLIMILVYL) form a helical membrane-spanning segment. Residues 181 to 354 (RIYLIAKRSH…LTREKRFTFV (174 aa)) are Cytoplasmic-facing. Disordered regions lie at residues 191–218 (RRGP…PSAL) and 233–311 (EANG…PLQQ). Over residues 280–292 (LEEEADKEEEEEC) the composition is skewed to acidic residues. The helical transmembrane segment at 355–378 (LAVVIGVFVLCWFPFFFSYSLGAI) threads the bilayer. Residues 379 to 390 (CPQHCKVPHGLF) lie on the Extracellular side of the membrane.

This sequence belongs to the G-protein coupled receptor 1 family. Adrenergic receptor subfamily. ADRA2B sub-subfamily. As to quaternary structure, interacts with RAB26. Interacts with PPP1R9B. Interacts with GGA1, GGA2 and GGA3.

The protein resides in the cell membrane. Its function is as follows. Alpha-2 adrenergic receptors mediate the catecholamine-induced inhibition of adenylate cyclase through the action of G proteins. The sequence is that of Alpha-2B adrenergic receptor (ADRA2B) from Dugong dugon (Dugong).